A 62-amino-acid chain; its full sequence is Large ribosomal subunit protein bL28 (62 aa).

It belongs to the bacterial ribosomal protein bL28 family.

The chain is Large ribosomal subunit protein bL28 from Streptococcus equi subsp. equi (strain 4047).